The primary structure comprises 326 residues: Toluene-4-monooxygenase system, ferredoxin--NAD(+) reductase component (326 aa).

A 2Fe-2S ferredoxin-type domain is found at 1–92 (MFNIQSDDLL…DLKIKVINRA (92 aa)). Residues Cys-36, Cys-41, Cys-44, and Cys-76 each coordinate [2Fe-2S] cluster. The interval 95 to 326 (RASHPPKRFS…FEAIHFDRFF (232 aa)) is ferredoxin-reductase. Residues 100–195 (PKRFSTRVVS…DGPYGLSVLK (96 aa)) form the FAD-binding FR-type domain. Residues 146 to 149 (RAYS), 162 to 164 (IVK), and 170 to 172 (KVS) contribute to the FAD site.

This sequence belongs to the bacterial ring-hydroxylating dioxygenase ferredoxin reductase family. In terms of assembly, monomer. The alkene monooxygenase multicomponent enzyme system is composed of an electron transfer component and a monooxygenase component interacting with the effector protein TmoD. The electron transfer component is composed of a ferredoxin reductase (TmoF) and a ferredoxin (TmoC), and the monooxygenase component is formed by a heterohexamer (dimer of heterotrimers) of two alpha subunits (TmoA), two beta subunits (TmoE) and two gamma subunits (TmoB). The cofactor is FAD. Requires [2Fe-2S] cluster as cofactor.

It carries out the reaction 2 reduced [2Fe-2S]-[ferredoxin] + NAD(+) + H(+) = 2 oxidized [2Fe-2S]-[ferredoxin] + NADH. The protein operates within xenobiotic degradation; toluene degradation. In terms of biological role, reductase component of the toluene-4-monooxygenase multicomponent enzyme system which catalyzes the O2- and NADH-dependent hydroxylation of toluene to form p-cresol. Ferredoxin reductase catalyzes the transfer of electrons from NADH to ferredoxin (TmoC). In Ectopseudomonas mendocina (Pseudomonas mendocina), this protein is Toluene-4-monooxygenase system, ferredoxin--NAD(+) reductase component.